The sequence spans 858 residues: Taste receptor type 1 member 3 (858 aa).

The N-terminal stretch at 1 to 20 (MPGLAILGLSLAAFLELGMG) is a signal peptide. The Extracellular segment spans residues 21–575 (SSLCLSQQFK…FLAWGEPAVL (555 aa)). N-linked (GlcNAc...) asparagine glycans are attached at residues asparagine 85, asparagine 130, asparagine 203, asparagine 264, asparagine 379, asparagine 387, asparagine 418, asparagine 439, and asparagine 482. Residues 576-596 (SLLLLLCLVLGLTLAALGLFV) traverse the membrane as a helical segment. At 597 to 610 (HYWDSPLVQASGGS) the chain is on the cytoplasmic side. The chain crosses the membrane as a helical span at residues 611 to 631 (LFCFGLICLGLFCLSVLLFPG). At 632-644 (RPRSASCLAQQPM) the chain is on the extracellular side. The chain crosses the membrane as a helical span at residues 645 to 665 (AHLPLTGCLSTLFLQAAEIFV). The Cytoplasmic portion of the chain corresponds to 666 to 687 (ESELPLSWANWLCSYLRGPWAW). A helical membrane pass occupies residues 688-708 (LVVLLATLVEAALCAWYLMAF). Residues 709-735 (PPEVVTDWQVLPTEVLEHCRMRSWVSL) are Extracellular-facing. A helical membrane pass occupies residues 736-756 (GLVHITNAVLAFLCFLGTFLV). The Cytoplasmic portion of the chain corresponds to 757-767 (QSQPGRYNRAR). The chain crosses the membrane as a helical span at residues 768-788 (GLTFAMLAYFIIWVSFVPLLA). The Extracellular segment spans residues 789–796 (NVQVAYQP). A helical membrane pass occupies residues 797–817 (AVQMGAILFCALGILATFHLP). The Cytoplasmic portion of the chain corresponds to 818 to 858 (KCYVLLWLPELNTQEFFLGRSPKEASDGNSGSSEATRGHSE). The segment at 839-858 (PKEASDGNSGSSEATRGHSE) is disordered.

The protein belongs to the G-protein coupled receptor 3 family. TAS1R subfamily. Forms homodimers or heterodimers with TAS1R1 and TAS1R2.

Its subcellular location is the cell membrane. Its function is as follows. Putative taste receptor. TAS1R1/TAS1R3 responds to the umami taste stimulus (the taste of monosodium glutamate) and also to most of the 20 standard L-amino acids, but not to their D-enantiomers or other compounds. TAS1R2/TAS1R3 recognizes diverse natural and synthetic sweeteners. TAS1R3 is essential for the recognition and response to the disaccharide trehalose. Sequence differences within and between species can significantly influence the selectivity and specificity of taste responses. This is Taste receptor type 1 member 3 (Tas1r3) from Rattus norvegicus (Rat).